A 333-amino-acid polypeptide reads, in one-letter code: PRKC apoptosis WT1 regulator protein (333 aa).

4 stretches are compositionally biased toward low complexity: residues 1–14, 33–51, 66–80, and 105–116; these read MATG…STTT, PAGP…PAGS, GPAG…APGA, and PSAAAASGAPGS. Residues 1-262 are disordered; it reads MATGGYRSGG…ASFSSSSTLE (262 aa). A B30.2/SPRY domain-binding motif motif is present at residues 62-66; the sequence is ELNHG. The Nuclear localization signal signature appears at 138–154; it reads RKGKGQIEKRKLREKRR. Residues 138–196 form a selective for apoptosis induction in cancer cells (SAC) region; that stretch reads RKGKGQIEKRKLREKRRSTGVVNIPAAECLDEYEDDEAGQKERKREDAITQQNTIQNEA. T156 carries the phosphothreonine; by PKA modification. The span at 175 to 185 shows a compositional bias: basic and acidic residues; that stretch reads AGQKERKREDA. A compositionally biased stretch (polar residues) spans 186–196; that stretch reads ITQQNTIQNEA. Phosphoserine is present on S224. Basic and acidic residues predominate over residues 235–248; it reads PRTDRSGFSRHNRD. The stretch at 255 to 333 forms a coiled coil; that stretch reads FSSSSTLEKR…LLKVVGQLTR (79 aa). The interval 293–333 is leucine-zipper; it reads IGKLKEEIDLLNRDLDDMEDENEQLKQENKTLLKVVGQLTR.

Homooligomer. Interacts (via the C-terminal region) with WT1. Interacts with THAP1. Interacts with AATF. Interacts with BACE1. Interacts with SPSB1 (via B30.2/SPRY domain); this interaction is direct and occurs in association with the Elongin BC complex. Interacts with SPSB2 (via B30.2/SPRY domain); this interaction occurs in association with the Elongin BC complex. Interacts with SPSB4 (via B30.2/SPRY domain); this interaction occurs in association with the Elongin BC complex. Component of a ternary complex composed of SQSTM1 and PRKCZ. Interacts with actin. In terms of processing, preferentially phosphorylated at the Thr-156 by PKC in cancer cells.

It is found in the cytoplasm. Its subcellular location is the nucleus. In terms of biological role, pro-apoptotic protein capable of selectively inducing apoptosis in cancer cells, sensitizing the cells to diverse apoptotic stimuli and causing regression of tumors in animal models. Induces apoptosis in certain cancer cells by activation of the Fas prodeath pathway and coparallel inhibition of NF-kappa-B transcriptional activity. Inhibits the transcriptional activation and augments the transcriptional repression mediated by WT1. Down-regulates the anti-apoptotic protein BCL2 via its interaction with WT1. Also seems to be a transcriptional repressor by itself. May be directly involved in regulating the amyloid precursor protein (APP) cleavage activity of BACE1. The polypeptide is PRKC apoptosis WT1 regulator protein (Pawr) (Mus musculus (Mouse)).